Reading from the N-terminus, the 1241-residue chain is ATP-dependent helicase/nuclease subunit A (1241 aa).

A UvrD-like helicase ATP-binding domain is found at 12–485 (SQWTDDQWKA…IDLAKNFRSR (474 aa)). Residue 33 to 40 (AAAGSGKT) coordinates ATP. Positions 505–805 (GEIDYDADAE…RIMTIHKSKG (301 aa)) constitute a UvrD-like helicase C-terminal domain.

It belongs to the helicase family. AddA subfamily. Heterodimer of AddA and AddB/RexB. Mg(2+) is required as a cofactor.

The catalysed reaction is Couples ATP hydrolysis with the unwinding of duplex DNA by translocating in the 3'-5' direction.. It carries out the reaction ATP + H2O = ADP + phosphate + H(+). Its function is as follows. The heterodimer acts as both an ATP-dependent DNA helicase and an ATP-dependent, dual-direction single-stranded exonuclease. Recognizes the chi site generating a DNA molecule suitable for the initiation of homologous recombination. The AddA nuclease domain is required for chi fragment generation; this subunit has the helicase and 3' -&gt; 5' nuclease activities. This is ATP-dependent helicase/nuclease subunit A from Bacillus cereus (strain Q1).